The following is a 209-amino-acid chain: Adenylate kinase (209 aa).

An ATP-binding site is contributed by 59-64 (GSGKRT). Residues 79-108 (SSGQVLTRGVESGSETSQLAHSYVSRGERV) form an NMP region. Residues serine 80, 106–108 (ERV), 135–138 (GYPR), and glutamine 142 each bind AMP. Residues 172-205 (HRRYDPATNKXYHMLDNPPPGGRCRVMRTAPAEG) form an LID region. Arginine 173 serves as a coordination point for ATP.

Belongs to the adenylate kinase family. Monomer.

It is found in the cytoplasm. The catalysed reaction is AMP + ATP = 2 ADP. In terms of biological role, catalyzes the reversible transfer of the terminal phosphate group between ATP and AMP. Plays an important role in cellular energy homeostasis and in adenine nucleotide metabolism. The chain is Adenylate kinase from Trypanosoma brucei rhodesiense.